The primary structure comprises 155 residues: Small ribosomal subunit protein uS17 (155 aa).

Position 2 is an N-acetylalanine (Ala2).

This sequence belongs to the universal ribosomal protein uS17 family.

In Drosophila yakuba (Fruit fly), this protein is Small ribosomal subunit protein uS17.